The following is an 863-amino-acid chain: uncharacterized protein (863 aa).

Residues 1–29 (MHQSGSVSLCRSAISVLVATALYSPIALA) form the signal peptide. Residues 595-863 (GVSYDTAMWS…NTQAGVVWTF (269 aa)) enclose the Autotransporter domain.

It localises to the cell outer membrane. This is an uncharacterized protein from Escherichia coli (strain K12).